Consider the following 597-residue polypeptide: UvrABC system protein C (597 aa).

The GIY-YIG domain occupies 15–93 (NSPGVYQYFD…IKKHQPRFNV (79 aa)). Positions 207–242 (KDSLQRFRNQMKQHSEKMEFEDAQRIKNKIDVLENY) constitute a UVR domain.

The protein belongs to the UvrC family. In terms of assembly, interacts with UvrB in an incision complex.

It is found in the cytoplasm. Its function is as follows. The UvrABC repair system catalyzes the recognition and processing of DNA lesions. UvrC both incises the 5' and 3' sides of the lesion. The N-terminal half is responsible for the 3' incision and the C-terminal half is responsible for the 5' incision. In Christiangramia forsetii (strain DSM 17595 / CGMCC 1.15422 / KT0803) (Gramella forsetii), this protein is UvrABC system protein C.